The following is a 348-amino-acid chain: Protein RecA (348 aa).

Position 65 to 72 (65 to 72 (GPESSGKT)) interacts with ATP. The interval 328–348 (SKPQAETSARLATQEELADDY) is disordered.

This sequence belongs to the RecA family.

The protein localises to the cytoplasm. In terms of biological role, can catalyze the hydrolysis of ATP in the presence of single-stranded DNA, the ATP-dependent uptake of single-stranded DNA by duplex DNA, and the ATP-dependent hybridization of homologous single-stranded DNAs. It interacts with LexA causing its activation and leading to its autocatalytic cleavage. The protein is Protein RecA of Ectopseudomonas oleovorans (Pseudomonas oleovorans).